Consider the following 172-residue polypeptide: Lipoprotein signal peptidase (172 aa).

The next 4 helical transmembrane spans lie at 12–32 (TSAA…VILF), 43–63 (VFAY…LVYN), 77–97 (WQRW…CYLL), and 102–122 (GQKM…GNVI). Residues Asp132 and Asp150 contribute to the active site. Residues 142-162 (HWPAFNLADSAITVGAVLLVL) form a helical membrane-spanning segment.

Belongs to the peptidase A8 family.

It is found in the cell inner membrane. The enzyme catalyses Release of signal peptides from bacterial membrane prolipoproteins. Hydrolyzes -Xaa-Yaa-Zaa-|-(S,diacylglyceryl)Cys-, in which Xaa is hydrophobic (preferably Leu), and Yaa (Ala or Ser) and Zaa (Gly or Ala) have small, neutral side chains.. It participates in protein modification; lipoprotein biosynthesis (signal peptide cleavage). This protein specifically catalyzes the removal of signal peptides from prolipoproteins. This chain is Lipoprotein signal peptidase, found in Paraburkholderia phytofirmans (strain DSM 17436 / LMG 22146 / PsJN) (Burkholderia phytofirmans).